We begin with the raw amino-acid sequence, 629 residues long: tRNA uridine 5-carboxymethylaminomethyl modification enzyme MnmG (629 aa).

Residues 13–18, valine 125, and serine 180 each bind FAD; that span reads GGGHAG. 273 to 287 serves as a coordination point for NAD(+); that stretch reads GPRYCPSIEDKIHRF. FAD is bound at residue glutamine 370.

It belongs to the MnmG family. As to quaternary structure, homodimer. Heterotetramer of two MnmE and two MnmG subunits. FAD is required as a cofactor.

It is found in the cytoplasm. NAD-binding protein involved in the addition of a carboxymethylaminomethyl (cmnm) group at the wobble position (U34) of certain tRNAs, forming tRNA-cmnm(5)s(2)U34. The polypeptide is tRNA uridine 5-carboxymethylaminomethyl modification enzyme MnmG (Shewanella sp. (strain ANA-3)).